A 294-amino-acid chain; its full sequence is Decaprenyl-diphosphate synthase subunit 2 (294 aa).

It belongs to the FPP/GGPP synthase family. In terms of assembly, heterotetramer of 2 dps1 and 2 dlp1 subunits.

Its subcellular location is the mitochondrion. The enzyme catalyses 7 isopentenyl diphosphate + (2E,6E)-farnesyl diphosphate = all-trans-decaprenyl diphosphate + 7 diphosphate. The protein operates within cofactor biosynthesis; ubiquinone biosynthesis. Supplies decaprenyl diphosphate, the precursor for the side chain of the isoprenoid quinones ubiquinone-10. This chain is Decaprenyl-diphosphate synthase subunit 2 (dlp1), found in Schizosaccharomyces pombe (strain 972 / ATCC 24843) (Fission yeast).